The following is a 154-amino-acid chain: Snaclec agglucetin subunit alpha-1 (154 aa).

The first 23 residues, 1-23 (MGRFIFVSFGLLVVFLSLSGTGA), serve as a signal peptide directing secretion. Disulfide bonds link C27–C38, C55–C150, and C125–C142. The C-type lectin domain occupies 34-151 (YDQSCYRVFK…CGSEYAFVCK (118 aa)). N116 carries an N-linked (GlcNAc...) asparagine glycan.

This sequence belongs to the snaclec family. In terms of assembly, heterotetramer of the subunits alpha-1, alpha-2, beta-1 and beta-2; disulfide-linked. As to expression, expressed by the venom gland.

Its subcellular location is the secreted. Its function is as follows. Agglucetin specifically causes platelet aggregation and surface exposure of integrin alpha-IIb/beta-3 with a GPIb-(GP1BA-) dependent manner in washed platelets. It binds to human platelets in a saturable manner, and its binding is specifically blocked by anti-GP Ib mAb. It regulates endothelial cell survival and promotes angiogenesis by activating integrin alpha-v/beta-3 signaling through FAK/phosphatidylinositol 3-kinase (PI3K)/Akt pathway. In Deinagkistrodon acutus (Hundred-pace snake), this protein is Snaclec agglucetin subunit alpha-1.